An 88-amino-acid polypeptide reads, in one-letter code: Beta-insect excitatory toxin LqhIT1a (88 aa).

A signal peptide spans Met1–Gly18. In terms of domain architecture, LCN-type CS-alpha/beta spans Lys20 to Asp83. 4 cysteine pairs are disulfide-bonded: Cys34-Cys55, Cys40-Cys60, Cys44-Cys62, and Cys56-Cys82.

It belongs to the long (4 C-C) scorpion toxin superfamily. Sodium channel inhibitor family. Beta subfamily. Expressed by the venom gland.

The protein localises to the secreted. In terms of biological role, excitatory insect toxins induce a spastic paralysis. They bind voltage-independently at site-4 of sodium channels (Nav) and shift the voltage of activation toward more negative potentials thereby affecting sodium channel activation and promoting spontaneous and repetitive firing. The sequence is that of Beta-insect excitatory toxin LqhIT1a from Leiurus hebraeus (Hebrew deathstalker scorpion).